Consider the following 145-residue polypeptide: Spore coat protein YeeK (145 aa).

PG repeat units lie at residues 9-15 (GGPGFGH), 22-28 (GHPGYGM), 32-38 (GYPGYGM), and 41-47 (GHPGYGM). GGY repeat units follow at residues 57–63 (GGVGGYP), 66–72 (GGYGGYP), and 74–80 (GGYGGSP). 4 H4 repeats span residues 99–105 (YHHHHDG), 111–117 (HHHHHVG), 121–127 (HHHHHDG), and 131–137 (HHHHHMG). The segment covering 100–138 (HHHHDGKDNLHHHHHHVGKDNHHHHHDGHYGHHHHHMGH) has biased composition (basic residues). Residues 100–145 (HHHHDGKDNLHHHHHHVGKDNHHHHHDGHYGHHHHHMGHWGKDGYK) form a disordered region.

The protein localises to the spore coat. In terms of biological role, part of the spore coat. The polypeptide is Spore coat protein YeeK (yeeK) (Bacillus subtilis (strain 168)).